The sequence spans 223 residues: UPF0502 protein Sbal_1765 (223 aa).

Belongs to the UPF0502 family.

This is UPF0502 protein Sbal_1765 from Shewanella baltica (strain OS155 / ATCC BAA-1091).